We begin with the raw amino-acid sequence, 116 residues long: Large ribosomal subunit protein bL19c (116 aa).

It belongs to the bacterial ribosomal protein bL19 family.

The protein localises to the plastid. It is found in the chloroplast. This chain is Large ribosomal subunit protein bL19c, found in Cyanidium caldarium (Red alga).